The primary structure comprises 78 residues: Probable Fe(2+)-trafficking protein (78 aa).

The protein belongs to the Fe(2+)-trafficking protein family. In terms of assembly, monomer.

Could be a mediator in iron transactions between iron acquisition and iron-requiring processes, such as synthesis and/or repair of Fe-S clusters in biosynthetic enzymes. This Buchnera aphidicola subsp. Schizaphis graminum (strain Sg) protein is Probable Fe(2+)-trafficking protein.